The chain runs to 343 residues: Dipeptide transport system permease protein DppC (343 aa).

The next 5 helical transmembrane spans lie at 44 to 64, 144 to 164, 195 to 215, 259 to 279, and 309 to 329; these read LVAMWIIAITLVFSVISAFVV, LIIALAAALIDLVIGVTYGII, LALLLGQGISSIIIAIGLFAW, GVIVVQIMFDIPSMIMYEAVL, and FQLIIPAIVLSVLSLTFIFFG. Residues 140-329 enclose the ABC transmembrane type-1 domain; it reads LRISLIIALA…VLSLTFIFFG (190 aa).

The protein belongs to the binding-protein-dependent transport system permease family. OppBC subfamily. In terms of assembly, the complex is composed of two ATP-binding proteins (DppD and DppF), two transmembrane proteins (DppB and DppC) and a solute-binding protein (DppA).

Its subcellular location is the cell membrane. In terms of biological role, part of the ABC transporter DppABCDF involved in dipeptide transport. Responsible for the translocation of the substrate across the membrane. The polypeptide is Dipeptide transport system permease protein DppC (Lactococcus lactis subsp. cremoris (strain MG1363)).